A 250-amino-acid chain; its full sequence is Low affinity immunoglobulin gamma Fc region receptor III-A (250 aa).

The signal sequence occupies residues 1–16 (MWQLLPPAALLLLVSA). At 17–208 (DTQTADPSKA…VSSFFLPWHQ (192 aa)) the chain is on the extracellular side. 2 consecutive Ig-like C2-type domains span residues 23–105 (PSKA…LEVH) and 99–189 (PVKL…VQIT). 2 cysteine pairs are disulfide-bonded: Cys-47/Cys-89 and Cys-128/Cys-172. N-linked (GlcNAc...) asparagine glycans are attached at residues Asn-56 and Asn-63. An N-linked (GlcNAc...) asparagine glycan is attached at Asn-180. The chain crosses the membrane as a helical span at residues 209 to 225 (ITFCLVMGVLFAVDTGL). Over 226-250 (YFSVRRHLQSSEEWRDGKVTWSKGP) the chain is Cytoplasmic.

Forms a heterooligomeric complex with ITAM-containing signaling subunits FCER1G. Interacts (via transmembrane domain) with signaling subunits; this interaction is a prerequisite for receptor complex expression on the cell surface and intracellular signal transduction. Binds the Fc region of antigen-complexed IgG. As to expression, expressed in gamma-delta T cells.

It localises to the cell membrane. In terms of biological role, receptor for the invariable Fc fragment of immunoglobulin gamma (IgG). Optimally activated upon binding of clustered antigen-IgG complexes displayed on cell surfaces, triggers lysis of antibody-coated cells, a process known as antibody-dependent cellular cytotoxicity (ADCC). Does not bind free monomeric IgG, thus avoiding inappropriate effector cell activation in the absence of antigenic trigger. Mediates IgG effector functions on natural killer (NK) cells. Binds antigen-IgG complexes generated upon infection and triggers NK cell-dependent cytokine production and degranulation to limit viral load and propagation. Fc-binding subunit that associates with FCER1G adapters to form functional signaling complexes. Following the engagement of antigen-IgG complexes, triggers phosphorylation of immunoreceptor tyrosine-based activation motif (ITAM)-containing adapter with subsequent activation of phosphatidylinositol 3-kinase signaling and sustained elevation of intracellular calcium that ultimately drive NK cell activation. Mediates enhanced ADCC in response to afucosylated IgGs. In Bos taurus (Bovine), this protein is Low affinity immunoglobulin gamma Fc region receptor III-A.